A 188-amino-acid polypeptide reads, in one-letter code: Elongation factor P (188 aa).

This sequence belongs to the elongation factor P family.

It localises to the cytoplasm. It functions in the pathway protein biosynthesis; polypeptide chain elongation. Involved in peptide bond synthesis. Stimulates efficient translation and peptide-bond synthesis on native or reconstituted 70S ribosomes in vitro. Probably functions indirectly by altering the affinity of the ribosome for aminoacyl-tRNA, thus increasing their reactivity as acceptors for peptidyl transferase. In Sulfurimonas denitrificans (strain ATCC 33889 / DSM 1251) (Thiomicrospira denitrificans (strain ATCC 33889 / DSM 1251)), this protein is Elongation factor P.